The chain runs to 427 residues: Trigger factor (427 aa).

Positions 163–248 (GDTVVIDFVG…VHEVKAKEVP (86 aa)) constitute a PPIase FKBP-type domain.

It belongs to the FKBP-type PPIase family. Tig subfamily.

It is found in the cytoplasm. It carries out the reaction [protein]-peptidylproline (omega=180) = [protein]-peptidylproline (omega=0). Involved in protein export. Acts as a chaperone by maintaining the newly synthesized protein in an open conformation. Functions as a peptidyl-prolyl cis-trans isomerase. The polypeptide is Trigger factor (Streptococcus equi subsp. zooepidemicus (strain MGCS10565)).